The sequence spans 508 residues: Photosystem II CP47 reaction center protein (508 aa).

Helical transmembrane passes span 21–36 (SVHL…WAGS), 101–115 (IILS…IWHW), 140–156 (GIHL…FGAF), 203–218 (IAAG…FHLS), 237–252 (VLSS…AFVV), and 457–472 (TFAL…HGAR).

It belongs to the PsbB/PsbC family. PsbB subfamily. As to quaternary structure, PSII is composed of 1 copy each of membrane proteins PsbA, PsbB, PsbC, PsbD, PsbE, PsbF, PsbH, PsbI, PsbJ, PsbK, PsbL, PsbM, PsbT, PsbX, PsbY, PsbZ, Psb30/Ycf12, at least 3 peripheral proteins of the oxygen-evolving complex and a large number of cofactors. It forms dimeric complexes. Binds multiple chlorophylls. PSII binds additional chlorophylls, carotenoids and specific lipids. is required as a cofactor.

The protein resides in the plastid. Its subcellular location is the chloroplast thylakoid membrane. In terms of biological role, one of the components of the core complex of photosystem II (PSII). It binds chlorophyll and helps catalyze the primary light-induced photochemical processes of PSII. PSII is a light-driven water:plastoquinone oxidoreductase, using light energy to abstract electrons from H(2)O, generating O(2) and a proton gradient subsequently used for ATP formation. This is Photosystem II CP47 reaction center protein from Adiantum capillus-veneris (Maidenhair fern).